The following is a 474-amino-acid chain: Glutamate--tRNA ligase (474 aa).

Residues 18 to 28 (PSPTGFLHIGG) carry the 'HIGH' region motif. Positions 244–248 (KLSKR) match the 'KMSKS' region motif. ATP is bound at residue lysine 247.

Belongs to the class-I aminoacyl-tRNA synthetase family. Glutamate--tRNA ligase type 1 subfamily. Monomer.

The protein localises to the cytoplasm. The enzyme catalyses tRNA(Glu) + L-glutamate + ATP = L-glutamyl-tRNA(Glu) + AMP + diphosphate. Its function is as follows. Catalyzes the attachment of glutamate to tRNA(Glu) in a two-step reaction: glutamate is first activated by ATP to form Glu-AMP and then transferred to the acceptor end of tRNA(Glu). The protein is Glutamate--tRNA ligase of Caulobacter sp. (strain K31).